Reading from the N-terminus, the 454-residue chain is tRNA-2-methylthio-N(6)-dimethylallyladenosine synthase (454 aa).

Positions 6–122 (RRYHITTFGC…LQDLLQEVLA (117 aa)) constitute an MTTase N-terminal domain. [4Fe-4S] cluster-binding residues include Cys15, Cys51, Cys85, Cys157, Cys161, and Cys164. The Radical SAM core domain occupies 143–380 (RESTVTAWVN…NHLVAIKAAE (238 aa)). The TRAM domain occupies 383 to 447 (QRYLGRIEEV…AFSLTGEPVK (65 aa)).

The protein belongs to the methylthiotransferase family. MiaB subfamily. Monomer. [4Fe-4S] cluster is required as a cofactor.

It localises to the cytoplasm. The enzyme catalyses N(6)-dimethylallyladenosine(37) in tRNA + (sulfur carrier)-SH + AH2 + 2 S-adenosyl-L-methionine = 2-methylsulfanyl-N(6)-dimethylallyladenosine(37) in tRNA + (sulfur carrier)-H + 5'-deoxyadenosine + L-methionine + A + S-adenosyl-L-homocysteine + 2 H(+). Catalyzes the methylthiolation of N6-(dimethylallyl)adenosine (i(6)A), leading to the formation of 2-methylthio-N6-(dimethylallyl)adenosine (ms(2)i(6)A) at position 37 in tRNAs that read codons beginning with uridine. The sequence is that of tRNA-2-methylthio-N(6)-dimethylallyladenosine synthase from Gloeothece citriformis (strain PCC 7424) (Cyanothece sp. (strain PCC 7424)).